Reading from the N-terminus, the 871-residue chain is DNA mismatch repair protein MutS (871 aa).

Residue 621–628 (GPNMAGKS) coordinates ATP.

The protein belongs to the DNA mismatch repair MutS family.

Functionally, this protein is involved in the repair of mismatches in DNA. It is possible that it carries out the mismatch recognition step. This protein has a weak ATPase activity. The protein is DNA mismatch repair protein MutS of Geobacter sulfurreducens (strain ATCC 51573 / DSM 12127 / PCA).